Reading from the N-terminus, the 320-residue chain is o-succinylbenzoate synthase (320 aa).

Lys-133 (proton donor) is an active-site residue. Positions 161, 190, and 213 each coordinate Mg(2+). Lys-235 (proton acceptor) is an active-site residue.

This sequence belongs to the mandelate racemase/muconate lactonizing enzyme family. MenC type 1 subfamily. A divalent metal cation is required as a cofactor.

It catalyses the reaction (1R,6R)-6-hydroxy-2-succinyl-cyclohexa-2,4-diene-1-carboxylate = 2-succinylbenzoate + H2O. Its pathway is quinol/quinone metabolism; 1,4-dihydroxy-2-naphthoate biosynthesis; 1,4-dihydroxy-2-naphthoate from chorismate: step 4/7. It functions in the pathway quinol/quinone metabolism; menaquinone biosynthesis. Its function is as follows. Converts 2-succinyl-6-hydroxy-2,4-cyclohexadiene-1-carboxylate (SHCHC) to 2-succinylbenzoate (OSB). This is o-succinylbenzoate synthase from Escherichia coli O127:H6 (strain E2348/69 / EPEC).